A 434-amino-acid polypeptide reads, in one-letter code: Enolase (434 aa).

Residue glutamine 163 participates in (2R)-2-phosphoglycerate binding. Catalysis depends on glutamate 205, which acts as the Proton donor. 3 residues coordinate Mg(2+): aspartate 242, glutamate 291, and aspartate 318. 4 residues coordinate (2R)-2-phosphoglycerate: lysine 343, arginine 372, serine 373, and lysine 394. Lysine 343 (proton acceptor) is an active-site residue.

This sequence belongs to the enolase family. Mg(2+) is required as a cofactor.

It localises to the cytoplasm. Its subcellular location is the secreted. The protein localises to the cell surface. It carries out the reaction (2R)-2-phosphoglycerate = phosphoenolpyruvate + H2O. Its pathway is carbohydrate degradation; glycolysis; pyruvate from D-glyceraldehyde 3-phosphate: step 4/5. In terms of biological role, catalyzes the reversible conversion of 2-phosphoglycerate (2-PG) into phosphoenolpyruvate (PEP). It is essential for the degradation of carbohydrates via glycolysis. The polypeptide is Enolase (Streptococcus pneumoniae serotype 19F (strain G54)).